Reading from the N-terminus, the 259-residue chain is Tumor necrosis factor receptor superfamily member 10C (259 aa).

The signal sequence occupies residues 1–25; sequence MARIPKTLKFVVVIVAVLLPVLAYS. 3 TNFR-Cys repeats span residues 29–66, 69–109, and 110–149; these read ARQEEVPQQTVAPQQQRHSFKGEECPAGSHRSEHTGAC, CTEG…DTVC, and QCKEGTFRNENSPEMCRKCSRCPSGEVQVSNCTSWDDIQC. Over residues 30–45 the composition is skewed to polar residues; the sequence is RQEEVPQQTVAPQQQR. Residues 30–56 are disordered; sequence RQEEVPQQTVAPQQQRHSFKGEECPAG. 7 disulfides stabilise this stretch: C53–C66, C69–C85, C88–C101, C91–C109, C111–C125, C128–C141, and C131–C149. N-linked (GlcNAc...) (high mannose) asparagine glycosylation is present at N77. Residues N140 and N156 are each glycosylated (N-linked (GlcNAc...) (high mannose) asparagine). Residues 160-224 form a disordered region; the sequence is ETPAAEETMN…TSPGTPAPAA (65 aa). TAPE repeat units lie at residues 162-176, 177-191, 192-206, 207-221, and 222-236; these read PAAEETMNTSPGTPA, PAAEETMTTSPGTPA, and PAAEETMITSPGTPA. The segment covering 185 to 217 has biased composition (low complexity); that stretch reads TSPGTPAPAAEETMTTSPGTPAPAAEETMTTSP. A236 is lipidated: GPI-anchor amidated alanine. A propeptide spans 237 to 259 (removed in mature form); it reads SSHYLSCTIVGIIVLIVLLIVFV.

Post-translationally, N-glycosylated and O-glycosylated. Higher expression in normal tissues than in tumor cell lines. Highly expressed in peripheral blood lymphocytes, spleen, skeletal muscle, placenta, lung and heart.

It is found in the cell membrane. Its function is as follows. Receptor for the cytotoxic ligand TRAIL. Lacks a cytoplasmic death domain and hence is not capable of inducing apoptosis. May protect cells against TRAIL mediated apoptosis by competing with TRAIL-R1 and R2 for binding to the ligand. The chain is Tumor necrosis factor receptor superfamily member 10C (TNFRSF10C) from Homo sapiens (Human).